The sequence spans 199 residues: Recombination protein RecR (199 aa).

The C4-type zinc-finger motif lies at 58–73; sequence CSVCSNLTDIDPCPLC. The region spanning 81 to 176 is the Toprim domain; the sequence is TVICVVQDPR…KATRIAHGIP (96 aa).

This sequence belongs to the RecR family.

Functionally, may play a role in DNA repair. It seems to be involved in an RecBC-independent recombinational process of DNA repair. It may act with RecF and RecO. The chain is Recombination protein RecR from Ruminiclostridium cellulolyticum (strain ATCC 35319 / DSM 5812 / JCM 6584 / H10) (Clostridium cellulolyticum).